Reading from the N-terminus, the 184-residue chain is Histone H3-like centromeric protein CSE4 (184 aa).

Residues 54–81 (YIQPERSASSQQIHPPEHHISAHERITK) are disordered. Over residues 68–80 (PPEHHISAHERIT) the composition is skewed to basic and acidic residues. An H3-like region spans residues 82 to 182 (ARGTRYKPTD…MQLARRIRGQ (101 aa)).

It belongs to the histone H3 family. Component of centromeric nucleosomes, where DNA is wrapped around a histone octamer core. The octamer contains two molecules each of H2A, H2B, CSE4/CENPA and H4 assembled in one CSE4-H4 heterotetramer and two H2A-H2B heterodimers. Interacts with the inner kinetochore. Post-translationally, ubiquitinated. Is degraded through ubiquitin-mediated proteolysis when not protected by its association to the kinetochore.

The protein resides in the nucleus. Its subcellular location is the chromosome. It localises to the centromere. Histone H3-like nucleosomal protein that is specifically found in centromeric nucleosomes. Replaces conventional H3 in the nucleosome core of centromeric chromatin that serves as an assembly site for the inner kinetochore. Required for recruitment and assembly of kinetochore proteins, mitotic progression and chromosome segregation. May serve as an epigenetic mark that propagates centromere identity through replication and cell division. The chain is Histone H3-like centromeric protein CSE4 (CSE4) from Kluyveromyces lactis (strain ATCC 8585 / CBS 2359 / DSM 70799 / NBRC 1267 / NRRL Y-1140 / WM37) (Yeast).